The following is a 264-amino-acid chain: Ribosomal RNA small subunit methyltransferase A (264 aa).

S-adenosyl-L-methionine is bound by residues Asn12, Leu14, Gly40, Glu61, Asp86, and Asn105.

This sequence belongs to the class I-like SAM-binding methyltransferase superfamily. rRNA adenine N(6)-methyltransferase family. RsmA subfamily.

The protein localises to the cytoplasm. It catalyses the reaction adenosine(1518)/adenosine(1519) in 16S rRNA + 4 S-adenosyl-L-methionine = N(6)-dimethyladenosine(1518)/N(6)-dimethyladenosine(1519) in 16S rRNA + 4 S-adenosyl-L-homocysteine + 4 H(+). In terms of biological role, specifically dimethylates two adjacent adenosines (A1518 and A1519) in the loop of a conserved hairpin near the 3'-end of 16S rRNA in the 30S particle. May play a critical role in biogenesis of 30S subunits. The chain is Ribosomal RNA small subunit methyltransferase A from Fusobacterium nucleatum subsp. nucleatum (strain ATCC 25586 / DSM 15643 / BCRC 10681 / CIP 101130 / JCM 8532 / KCTC 2640 / LMG 13131 / VPI 4355).